The primary structure comprises 630 residues: 1-deoxy-D-xylulose-5-phosphate synthase (630 aa).

Thiamine diphosphate-binding positions include histidine 87 and 128-130 (GHS). Aspartate 159 contributes to the Mg(2+) binding site. Residues 160–161 (GA), asparagine 188, phenylalanine 295, and glutamate 377 contribute to the thiamine diphosphate site. Asparagine 188 is a binding site for Mg(2+).

This sequence belongs to the transketolase family. DXPS subfamily. As to quaternary structure, homodimer. The cofactor is Mg(2+). Requires thiamine diphosphate as cofactor.

The enzyme catalyses D-glyceraldehyde 3-phosphate + pyruvate + H(+) = 1-deoxy-D-xylulose 5-phosphate + CO2. The protein operates within metabolic intermediate biosynthesis; 1-deoxy-D-xylulose 5-phosphate biosynthesis; 1-deoxy-D-xylulose 5-phosphate from D-glyceraldehyde 3-phosphate and pyruvate: step 1/1. Functionally, catalyzes the acyloin condensation reaction between C atoms 2 and 3 of pyruvate and glyceraldehyde 3-phosphate to yield 1-deoxy-D-xylulose-5-phosphate (DXP). The chain is 1-deoxy-D-xylulose-5-phosphate synthase from Pseudomonas syringae pv. syringae (strain B728a).